The primary structure comprises 225 residues: Large ribosomal subunit protein bL25 (225 aa).

The tract at residues 206–225 (EDSKNKITKDNETNKDKSNL) is disordered.

It belongs to the bacterial ribosomal protein bL25 family. CTC subfamily. In terms of assembly, part of the 50S ribosomal subunit; part of the 5S rRNA/L5/L18/L25 subcomplex. Contacts the 5S rRNA. Binds to the 5S rRNA independently of L5 and L18.

This is one of the proteins that binds to the 5S RNA in the ribosome where it forms part of the central protuberance. This is Large ribosomal subunit protein bL25 from Vesicomyosocius okutanii subsp. Calyptogena okutanii (strain HA).